The sequence spans 458 residues: Exodeoxyribonuclease 7 large subunit (458 aa).

It belongs to the XseA family. Heterooligomer composed of large and small subunits.

It localises to the cytoplasm. It carries out the reaction Exonucleolytic cleavage in either 5'- to 3'- or 3'- to 5'-direction to yield nucleoside 5'-phosphates.. Its function is as follows. Bidirectionally degrades single-stranded DNA into large acid-insoluble oligonucleotides, which are then degraded further into small acid-soluble oligonucleotides. The protein is Exodeoxyribonuclease 7 large subunit of Yersinia enterocolitica serotype O:8 / biotype 1B (strain NCTC 13174 / 8081).